A 355-amino-acid chain; its full sequence is Transcription factor TGAL9 (355 aa).

Disordered regions lie at residues phenylalanine 83–isoleucine 104 and glycine 118–threonine 188. A compositionally biased stretch (low complexity) spans glycine 118–serine 134. Over residues arginine 135 to serine 144 the composition is skewed to polar residues. 2 stretches are compositionally biased toward basic and acidic residues: residues lysine 148–glycine 159 and serine 176–threonine 188. Residues aspartate 185–arginine 230 enclose the bZIP domain. A basic motif region spans residues lysine 187–lysine 207. Residues leucine 213–leucine 227 are leucine-zipper. In terms of domain architecture, DOG1 spans alanine 254–threonine 355.

It belongs to the bZIP family. Interacts with NPR5/NH4, NH5.1 and NH5.2.

It localises to the nucleus. In terms of biological role, transcriptional regulator involved in defense response. The polypeptide is Transcription factor TGAL9 (Oryza sativa subsp. japonica (Rice)).